A 259-amino-acid chain; its full sequence is MRAGRGTLGVCLASVKQSQGGDLDKLACGLKRRSEKRNPSPSDVPSWTDQPVADTHGKSRAMAAASSEMKRDQSKASLILHSGFKALQYLKESMGRNSTPAASLSMAVVLSSAPSEEHGAGVSGGIGDTLGSDWPAREPRTTDSCGQYLKGEAWVSGWQGHPKVREVGFLRGEPLSAVPKGLGTRSELSYCSELCQLPYTYPYYEALPEDKTRCVSLDHLSPVFSEETVEDEKTLSSTSDGLQIVMGLLALQSSRLTSL.

Positions 29 to 66 (GLKRRSEKRNPSPSDVPSWTDQPVADTHGKSRAMAAAS) are disordered. The span at 39–49 (PSPSDVPSWTD) shows a compositional bias: polar residues.

In terms of assembly, interacts with transcriptional activator STAT3; the interaction occurs in both the nucleus and the cytoplasm, is enhanced by IL6 and promotes STAT3 dephosphorylation, leading to negative regulation of STAT3 transcriptional activator activity. Can interact with both unphosphorylated and phosphorylated STAT3 but interacts preferentially with phosphorylated STAT3 in the nucleus. Interacts with protein phosphatase PTPN2/TC45; this promotes interaction of PTPN2 with STAT3, leading to dephosphorylation of STAT3 by PTPN2.

The protein localises to the nucleus. It localises to the cytoplasm. Its subcellular location is the cytoplasmic vesicle. It is found in the secretory vesicle. The protein resides in the acrosome. Functionally, promotes dephosphorylation of transcriptional activator STAT3 by interacting with both STAT3 and protein phosphatase PTPN2. This promotes interaction of PTPN2 with STAT3 and mediates STAT3 dephosphorylation by PTPN2, leading to negative regulation of STAT3 transcriptional activator activity. May be required for spermiogenesis or sperm function. The protein is Protein FAM220A (Fam220a) of Rattus norvegicus (Rat).